Here is a 121-residue protein sequence, read N- to C-terminus: CRISPR system Cms protein Csm2 (121 aa).

Belongs to the CRISPR-associated Csm2 family. In terms of assembly, part of the Csm effector complex that includes at least Cas10(1), Csm2(3), Csm3(5), Csm4(1), Csm5(1) and mature crRNA. The Csm complex is elongated and slightly twisted with a maximal length of 215 Angstroms and a diameter of 75-80 Angstroms. It has been modeled to have a central protein filamant of Csm3 subunits along which the dsRNA helix of paired crRNA and target RNA binds. The filament is capped at one end by Cas10 and Csm4 and at the other end by Csm5; ssDNA is thought to bind to the N-terminal HD domain of Cas10. Csm with a precursor crRNA does not include Csm5, while Cas6, the enzyme probably involved in pre-crRNA processing, is found associated with a subset of the Csm complex.

Functionally, CRISPR (clustered regularly interspaced short palindromic repeat) is an adaptive immune system that provides protection against mobile genetic elements (viruses, transposable elements and conjugative plasmids). CRISPR clusters contain spacers, sequences complementary to antecedent mobile elements, and target invading nucleic acids. CRISPR clusters are transcribed and processed into CRISPR RNA (crRNA). The type III-A Csm effector complex binds crRNA and acts as a crRNA-guided RNase, DNase and cyclic oligoadenylate synthase; binding of target RNA cognate to the crRNA is required for all activities. In a heterologous host this Csm effector complex restricts ssRNA phage MS2, suggesting it may target RNA viruses in vivo. Csm functions as a non-specific ssDNase. Base-pairing between crRNA and target RNA to form a ternary Csm complex activates a ssDNase activity; target RNA cleavage suppresses the ssDNase, a temporal control that prevents uncontrolled DNA degradation. Viral RNA transcripts probably tether the Csm complex to the viral genome, recruiting Cas10 ssDNA activity which is able to degrade DNA in the transcription bubble, spatially controlling the DNase activity. Its function is as follows. This subunit may be involved in monitoring complementarity of crRNA and target RNA. This Streptococcus thermophilus protein is CRISPR system Cms protein Csm2.